A 176-amino-acid polypeptide reads, in one-letter code: Peptide deformylase (176 aa).

Fe cation-binding residues include C95 and H137. E138 is a catalytic residue. H141 serves as a coordination point for Fe cation.

Belongs to the polypeptide deformylase family. Fe(2+) is required as a cofactor.

It carries out the reaction N-terminal N-formyl-L-methionyl-[peptide] + H2O = N-terminal L-methionyl-[peptide] + formate. Removes the formyl group from the N-terminal Met of newly synthesized proteins. Requires at least a dipeptide for an efficient rate of reaction. N-terminal L-methionine is a prerequisite for activity but the enzyme has broad specificity at other positions. The polypeptide is Peptide deformylase (Hyphomonas neptunium (strain ATCC 15444)).